A 186-amino-acid chain; its full sequence is Meiotically up-regulated gene 163 protein (186 aa).

It is found in the mitochondrion. Has a role in meiosis. This chain is Meiotically up-regulated gene 163 protein (mug163), found in Schizosaccharomyces pombe (strain 972 / ATCC 24843) (Fission yeast).